The primary structure comprises 466 residues: Ribulose bisphosphate carboxylase large chain (466 aa).

K4 is subject to N6,N6,N6-trimethyllysine. Substrate is bound by residues N113 and T163. Residue K165 is the Proton acceptor of the active site. Position 167 (K167) interacts with substrate. The Mg(2+) site is built by K191, D193, and E194. K191 carries the N6-carboxylysine modification. Catalysis depends on H284, which acts as the Proton acceptor. The substrate site is built by R285, H317, and S369.

This sequence belongs to the RuBisCO large chain family. Type I subfamily. As to quaternary structure, heterohexadecamer of 8 large chains and 8 small chains; disulfide-linked. The disulfide link is formed within the large subunit homodimers. Requires Mg(2+) as cofactor. The disulfide bond which can form in the large chain dimeric partners within the hexadecamer appears to be associated with oxidative stress and protein turnover.

It localises to the plastid. The protein localises to the chloroplast. The catalysed reaction is 2 (2R)-3-phosphoglycerate + 2 H(+) = D-ribulose 1,5-bisphosphate + CO2 + H2O. The enzyme catalyses D-ribulose 1,5-bisphosphate + O2 = 2-phosphoglycolate + (2R)-3-phosphoglycerate + 2 H(+). RuBisCO catalyzes two reactions: the carboxylation of D-ribulose 1,5-bisphosphate, the primary event in carbon dioxide fixation, as well as the oxidative fragmentation of the pentose substrate in the photorespiration process. Both reactions occur simultaneously and in competition at the same active site. This Drimys winteri (Winter's bark) protein is Ribulose bisphosphate carboxylase large chain.